Consider the following 373-residue polypeptide: ATP synthase gamma chain 1, chloroplastic (373 aa).

Residues 1-50 constitute a chloroplast transit peptide; sequence MACSNLTTMWVSSKPSLSADSSSLSFRSVLKCPTNTSSPPSRASSVSPLQ. Cysteine 139 is a catalytic residue. Cysteine 249 and cysteine 255 are disulfide-bonded. The residue at position 347 (serine 347) is a Phosphoserine.

This sequence belongs to the ATPase gamma chain family. As to quaternary structure, F-type ATPases have 2 components, CF(1) - the catalytic core - and CF(0) - the membrane proton channel. CF(1) has five subunits: alpha(3), beta(3), gamma(1), delta(1), epsilon(1). CF(0) has four main subunits: a, b, b' and c. Interacts with PAB.

The protein resides in the plastid. It localises to the chloroplast thylakoid membrane. Its function is as follows. Produces ATP from ADP in the presence of a proton gradient across the membrane. The gamma chain is believed to be important in regulating ATPase activity and the flow of protons through the CF(0) complex. The protein is ATP synthase gamma chain 1, chloroplastic (ATPC1) of Arabidopsis thaliana (Mouse-ear cress).